The following is a 259-amino-acid chain: Proteasome subunit alpha (259 aa).

Positions 233 to 243 (PAAPAAASESA) are enriched in low complexity. The interval 233-259 (PAAPAAASESAPEPKPDTETKPADPQD) is disordered. The segment covering 244–259 (PEPKPDTETKPADPQD) has biased composition (basic and acidic residues).

Belongs to the peptidase T1A family. In terms of assembly, the 20S proteasome core is composed of 14 alpha and 14 beta subunits that assemble into four stacked heptameric rings, resulting in a barrel-shaped structure. The two inner rings, each composed of seven catalytic beta subunits, are sandwiched by two outer rings, each composed of seven alpha subunits. The catalytic chamber with the active sites is on the inside of the barrel. Has a gated structure, the ends of the cylinder being occluded by the N-termini of the alpha-subunits. Is capped by the proteasome-associated ATPase, ARC.

The protein resides in the cytoplasm. It participates in protein degradation; proteasomal Pup-dependent pathway. Its activity is regulated as follows. The formation of the proteasomal ATPase ARC-20S proteasome complex, likely via the docking of the C-termini of ARC into the intersubunit pockets in the alpha-rings, may trigger opening of the gate for substrate entry. Interconversion between the open-gate and close-gate conformations leads to a dynamic regulation of the 20S proteasome proteolysis activity. Component of the proteasome core, a large protease complex with broad specificity involved in protein degradation. In Rhodococcus opacus (strain B4), this protein is Proteasome subunit alpha.